Consider the following 562-residue polypeptide: NAD-dependent malic enzyme (562 aa).

Tyr101 functions as the Proton donor in the catalytic mechanism. Arg154 serves as a coordination point for NAD(+). The Proton acceptor role is filled by Lys172. Residues Glu243, Asp244, and Asp267 each coordinate a divalent metal cation. Positions 267 and 415 each coordinate NAD(+).

It belongs to the malic enzymes family. As to quaternary structure, homotetramer. It depends on Mg(2+) as a cofactor. The cofactor is Mn(2+).

It catalyses the reaction (S)-malate + NAD(+) = pyruvate + CO2 + NADH. The enzyme catalyses oxaloacetate + H(+) = pyruvate + CO2. The sequence is that of NAD-dependent malic enzyme from Shewanella sp. (strain ANA-3).